The chain runs to 288 residues: Ribosome biogenesis GTPase A (288 aa).

Positions 14-179 (RRQVTEKLKL…LLDTPGILWP (166 aa)) constitute a CP-type G domain. Residues 58–61 (NKVD), 131–136 (NVGKST), and G175 each bind GTP.

Belongs to the TRAFAC class YlqF/YawG GTPase family. MTG1 subfamily. In terms of assembly, interacts with ctc. Interacts with the immature 50S ribosome subunit. 2 molecules of rbgA bind to one 50S subunit.

Its subcellular location is the cytoplasm. In terms of biological role, essential protein that is required for a late step of 50S ribosomal subunit assembly. Has GTPase activity that is stimulated by interaction with the immature 50S ribosome subunit. Binds to the 23S rRNA. Required for the association of ribosomal proteins rplP and rpmA with the large subunit. This is Ribosome biogenesis GTPase A from Priestia megaterium (strain DSM 319 / IMG 1521) (Bacillus megaterium).